The chain runs to 196 residues: Pyridoxal 5'-phosphate synthase subunit PdxT (196 aa).

47 to 49 (GES) contacts L-glutamine. Cysteine 79 acts as the Nucleophile in catalysis. Residues arginine 106 and 134-135 (IR) each bind L-glutamine. Residues histidine 170 and glutamate 172 each act as charge relay system in the active site.

This sequence belongs to the glutaminase PdxT/SNO family. As to quaternary structure, in the presence of PdxS, forms a dodecamer of heterodimers. Only shows activity in the heterodimer.

The enzyme catalyses aldehydo-D-ribose 5-phosphate + D-glyceraldehyde 3-phosphate + L-glutamine = pyridoxal 5'-phosphate + L-glutamate + phosphate + 3 H2O + H(+). It carries out the reaction L-glutamine + H2O = L-glutamate + NH4(+). It functions in the pathway cofactor biosynthesis; pyridoxal 5'-phosphate biosynthesis. Its function is as follows. Catalyzes the hydrolysis of glutamine to glutamate and ammonia as part of the biosynthesis of pyridoxal 5'-phosphate. The resulting ammonia molecule is channeled to the active site of PdxS. The protein is Pyridoxal 5'-phosphate synthase subunit PdxT of Bacillus anthracis (strain A0248).